A 932-amino-acid chain; its full sequence is LPS-assembly protein LptD (932 aa).

The N-terminal stretch at 1-33 is a signal peptide; that stretch reads MALKSPAFRRKFPLLVTGGLLALQPLATSYAVA. The tract at residues 54–87 is disordered; it reads PVNNLPPRPVHEGAAVSSGTEAASEGETADRPML.

This sequence belongs to the LptD family. In terms of assembly, component of the lipopolysaccharide transport and assembly complex. Interacts with LptE and LptA.

The protein resides in the cell outer membrane. Functionally, together with LptE, is involved in the assembly of lipopolysaccharide (LPS) at the surface of the outer membrane. This is LPS-assembly protein LptD from Pseudomonas putida (strain GB-1).